The following is a 1242-amino-acid chain: Reverse gyrase 1 (1242 aa).

The RG N-terminal-type zinc-finger motif lies at 6-46; it reads KVPPSIYTRSCPNCGGNISSQRLFNGSVCESCLKDDREFSN. 4 residues coordinate Zn(2+): Cys-16, Cys-19, Cys-34, and Cys-37. Residues Gln-93 and 110–117 each bind ATP; that span reads APPGLGKT. Positions 97–298 constitute a Helicase ATP-binding domain; the sequence is TIRFLRGESF…SLMGFRPGSS (202 aa). The DEAD box signature appears at 214-217; that stretch reads DDVD. The topoisomerase I stretch occupies residues 615-1242; the sequence is LSVKTTLFIV…ELYNEIQTIS (628 aa). In terms of domain architecture, Toprim spans 619 to 785; it reads TTLFIVESPN…NIKRAEFHEV (167 aa). Glu-625 provides a ligand contact to Mg(2+). The RG C-terminal-type; atypical zinc finger occupies 703–731; the sequence is IKKCEKGHQIVKDLSQNKCPICGSRIVTD. 4 residues coordinate Zn(2+): Cys-706, His-710, Cys-721, and Cys-724. Asp-754 is a Mg(2+) binding site. Residues 801–1242 form the Topo IA-type catalytic domain; sequence NDNLVKSQIV…ELYNEIQTIS (442 aa). Tyr-965 functions as the O-(5'-phospho-DNA)-tyrosine intermediate in the catalytic mechanism.

This sequence in the N-terminal section; belongs to the DEAD box helicase family. DDVD subfamily. In the C-terminal section; belongs to the type IA topoisomerase family. In terms of assembly, monomer. The cofactor is Zn(2+). Mg(2+) is required as a cofactor.

The protein localises to the cytoplasm. The enzyme catalyses ATP + H2O = ADP + phosphate + H(+). At least one of the two reverse gyrase proteins is inhibited by actinomycin D. Highly sensitive to NaCl concentrations, maximal positive supercoiling is observed with 10 mM NaCl; as NaCl rises, supercoiling decreases. At 300 mM NaCl relaxes but does not introduce positive supercoils into negatively supercoiled substrate, at 400 mM NaCl does not relax DNA. In terms of biological role, modifies the topological state of DNA by introducing positive supercoils in an ATP-dependent process. Increases the linking number in steps of +1. Involved in homeostatic control of DNA topology in balance with type II topoisomerase 6 (TopoVI); levels of TopoVI are constant at 80 and 88 degrees Celsius and TopoVI is probably less active at 88 degrees (characterized enzyme is from S.shibatae B12), so reverse gyrase mediates most of the fine-tuning of DNA topology. Changes the DNA linking number step-by-step in a distributive manner. At low protein to DNA ratios mostly relaxes negatively supercoiled substrate, as ratios rise more positive supercoils are introduced. At 90 degrees Celsius introduces 19 positive supercoils into pTZ18R DNA (probably 2860 bp), less than TopR2. Relaxes negatively supercoiled DNA in the absence of ATP. It cleaves transiently a single DNA strand and remains covalently bound to the 5' DNA end through a tyrosine residue. May be involved in DNA damage response. Its activity is inhibited by the DNA-binding protein 7d (Sso7d), suggesting that the Sso7d activity might counteract the overwinding effect of reverse gyrase. Resolves 4-way Holliday junctions (HJ) with 20 bases in each arm in vitro, distorting the junction. Very high protein levels are required, but total enzyme content of the cell (there are 2 reverse gyrases in this organism) is estimated to be 20-200 molecules/cell. HJ resolution does not require either ATPase activity or the active tyrosine. The individual domains do not resolve HJs but do so when mixed. Also unwinds a fork substrate. Functionally, there are 2 genes for this protein in the cell. During exponential growth this is the less expressed isoform (about 52 molecules per cell at 80 degrees Celsius, about 28 molecules at 88 degrees Celsius); this isoform is more active at higher temperature. Grows actively at both 80 and 88 degrees Celsius; survives a long exposure at 45 degrees Celsius without DNA replication or cell division occurring. Experiments using whole cell extracts do not distinguish which isoform is present, the results are probably a mixture of the two forms. This Saccharolobus solfataricus (strain ATCC 35092 / DSM 1617 / JCM 11322 / P2) (Sulfolobus solfataricus) protein is Reverse gyrase 1.